Consider the following 208-residue polypeptide: Protein-L-isoaspartate O-methyltransferase (208 aa).

The active site involves serine 59.

Belongs to the methyltransferase superfamily. L-isoaspartyl/D-aspartyl protein methyltransferase family.

The protein resides in the cytoplasm. It catalyses the reaction [protein]-L-isoaspartate + S-adenosyl-L-methionine = [protein]-L-isoaspartate alpha-methyl ester + S-adenosyl-L-homocysteine. Functionally, catalyzes the methyl esterification of L-isoaspartyl residues in peptides and proteins that result from spontaneous decomposition of normal L-aspartyl and L-asparaginyl residues. It plays a role in the repair and/or degradation of damaged proteins. The protein is Protein-L-isoaspartate O-methyltransferase of Salmonella arizonae (strain ATCC BAA-731 / CDC346-86 / RSK2980).